Here is a 735-residue protein sequence, read N- to C-terminus: Protein-associating with the carboxyl-terminal domain of ezrin (735 aa).

A lipid anchor (N-myristoyl glycine) is attached at Gly2. One can recognise a Protein kinase domain in the interval 2–245 (GSENSALKSY…LSTLLSHDFF (244 aa)). HEAT repeat units follow at residues 194 to 249 (FGAL…RNDF), 285 to 323 (LIAS…NAPG), 333 to 370 (LFQS…HFTQ), and 372 to 409 (QLKK…LLGP). A Phosphoserine modification is found at Ser439. Disordered stretches follow at residues 505-545 (LSDV…ASIH) and 604-648 (VPLT…GLGL). Acidic residues predominate over residues 528–538 (WPDWSEPEEPE). The interaction with EZR stretch occupies residues 547–735 (WPREPCDVAE…EELAWEDNNW (189 aa)). Residue Ser701 is modified to Phosphoserine.

The protein belongs to the protein kinase superfamily. Interacts with EZR/VIL2 C-terminal domain. May be myristoylated; myristoylation may target it to Golgi compartment.

It localises to the cytoplasm. The protein localises to the golgi apparatus. The protein resides in the cell projection. Its subcellular location is the lamellipodium. Its function is as follows. May play a role in regulating cell adhesion/migration complexes in migrating cells. The polypeptide is Protein-associating with the carboxyl-terminal domain of ezrin (Scyl3) (Mus musculus (Mouse)).